The chain runs to 249 residues: (2S)-[(R)-hydroxy(phenyl)methyl]succinyl-CoA dehydrogenase subunit BbsC (249 aa).

The protein belongs to the short-chain dehydrogenases/reductases (SDR) family. In terms of assembly, heterotetramer composed of 2 inactive BbsC subunits and 2 active BbsD subunits.

The protein operates within xenobiotic degradation; toluene degradation. Involved in an anaerobic toluene degradation pathway. Catalytically inactive subunit, which is probably required for the structural and/or regulatory integrity of the catalytic subunit BbsD. This subunit cannot bind NAD(+) or substrate. This Thauera aromatica protein is (2S)-[(R)-hydroxy(phenyl)methyl]succinyl-CoA dehydrogenase subunit BbsC.